The primary structure comprises 251 residues: Prolactin-7B1 (251 aa).

A signal peptide spans 1–29 (MNTSLTQLCFWALQILLMSNLLLWEDVVS). Asn2 and Asn73 each carry an N-linked (GlcNAc...) asparagine glycan. 2 disulfide bridges follow: Cys100–Cys216 and Cys233–Cys241.

The protein belongs to the somatotropin/prolactin family. In terms of tissue distribution, expression restricted to placenta. Abundantly expressed in trophoblast cells of the junctional zone and trophoblasts migrating into the mesometrial decidua.

It is found in the secreted. The sequence is that of Prolactin-7B1 (Prl7b1) from Mus musculus (Mouse).